The sequence spans 317 residues: Protoheme IX farnesyltransferase (317 aa).

9 consecutive transmembrane segments (helical) span residues 28–48 (IIPL…HGHI), 53–73 (LLIT…LNCI), 101–121 (LIFA…FVNL), 122–142 (LSAC…THWL), 150–170 (IVIG…AVTG), 178–198 (ILFA…ALMI), 223–243 (IWIY…PFQA), 246–266 (LFYA…AWEL), and 282–302 (YSIL…LPAV).

Belongs to the UbiA prenyltransferase family. Protoheme IX farnesyltransferase subfamily.

Its subcellular location is the cell inner membrane. It carries out the reaction heme b + (2E,6E)-farnesyl diphosphate + H2O = Fe(II)-heme o + diphosphate. It functions in the pathway porphyrin-containing compound metabolism; heme O biosynthesis; heme O from protoheme: step 1/1. In terms of biological role, converts heme B (protoheme IX) to heme O by substitution of the vinyl group on carbon 2 of heme B porphyrin ring with a hydroxyethyl farnesyl side group. The polypeptide is Protoheme IX farnesyltransferase (Picosynechococcus sp. (strain ATCC 27264 / PCC 7002 / PR-6) (Agmenellum quadruplicatum)).